The chain runs to 339 residues: MAMQMQLEASADTSVEEESFGPQPISRLEQCGINANDVKKLEEAGYHTVEAVAYAPKKELINIKGISEAKADKILTEAAKLVPMGFTTATEFHQRRSEIIQITTGSKELDKLLQGGIETGSITEMFGEFRTGKTQICHTLAVTCQLPIDRGGGEGKAMYIDTEGTFRPERLLAVAERYGLSGSDVLDNVAYARGFNTDHQTQLLYQASAMMVESRYALLIVDSATALYRTDYSGRGELSARQMHLARFLRMLLRLADEFGVAVVITNQVVAQVDGAAMFAADPKKPIGGNIIAHASTTRLYLRKGRGETRICKIYDSPCLPEAEAMFAINADGVGDAKD.

A disordered region spans residues 1–22; it reads MAMQMQLEASADTSVEEESFGP. Ala-2 carries the N-acetylalanine modification. At Thr-13 the chain carries Phosphothreonine. Ser-14 carries the post-translational modification Phosphoserine. Residues 48 to 77 form the HhH domain; it reads TVEAVAYAPKKELINIKGISEAKADKILTE. Phosphotyrosine; by ABL1 is present on Tyr-54. Glycyl lysine isopeptide (Lys-Gly) (interchain with G-Cter in ubiquitin) cross-links involve residues Lys-58 and Lys-64. 127-134 is a binding site for ATP; it reads GEFRTGKT. Positions 184–257 are interaction with PALB2; that stretch reads DVLDNVAYAR…FLRMLLRLAD (74 aa). Positions 245–260 match the Nuclear export signal; masked by the interaction with BRCA2 motif; sequence LARFLRMLLRLADEFG. Thr-309 bears the Phosphothreonine; by CHEK1 mark.

It belongs to the RecA family. RAD51 subfamily. In terms of assembly, forms linear homooligomers, giving rise to a RAD51 nucleoprotein filament, which is essential for strand-pairing reactions during DNA recombination. Interacts with BRCA1 and either directly or indirectly with p53. Interacts with XRCC3, RAD54L and RAD54B. Interacts with the BCDX2 subcomplex RAD51C:RAD51B. Component of the homologous recombination repair (HR) complex composed of ERCC5/XPG, BRCA2, PALB2, DSS1 and RAD51. Interacts directly with PALB2 which may serve as a scaffold for a HR complex containing PALB2, BRCA2, RAD51C, RAD51 and XRCC3. Interacts with RAD51AP1 and RAD51AP2. Interacts with CHEK1, and this may require prior phosphorylation of CHEK1. Interacts with the MND1-PSMC3IP heterodimer. Found in a complex, at least composed of BLM, RAD51 and SPIDR; the complex formation is mediated by SPIDR. Interacts with SPIDR; the interaction is direct and recruits RAD51 to DNA damage sites. Interacts with FIGNL1 (via N-terminal one-half region); the interaction is direct. Interacts with RAD51AP1 (via C-terminal region); the interaction is direct. Interacts with NABP2, RPA1, PALB2 and RAD51. Interacts with SWI5/C9orf119, and at lower level with SFR1/MEIR5. Interacts with hyperphosphorylated RPA2; this interaction is necessary for efficient recruitment to chromatin in response to DNA damage. Interacts with SWSAP1; involved in homologous recombination repair. Interacts with PARPBP, BRCA2 and RECQL5; these interactions interfere with the formation of the RAD51-DNA homologous recombination structure. Interacts with POLQ; POLQ acts as an inhibitor of homology-recombination repair (HR) pathway by limiting RAD51 accumulation at resected ends. Interacts with POLN. Interacts with FBH1. Interacts with RFWD3. Interacts with the MCM8-MCM9 complex; the interaction recruits RAD51 to DNA damage sites. Component of a multiprotein complex with MEIOB and SPATA22. Interacts with the complex BRME1:HSF2BP:BRCA2. Interacts with HELQ; stimulating HELQ DNA helicase activity and ability to unwing DNA. Interacts with MMS22L; the interaction is direct and promotes recruitment of RAD51 to sites of DNA damage. Interacts with the ATAD5 RFC-like complex. Within the ATAD5 RFC-like complex, interacts with ATAD5 (via N-terminus); the interaction is direct and enhanced under replication stress. Interacts with WDR48; the interaction is enhanced under replication stress. Interacts with DNA helicase ZGRF1; the interaction promotes RAD51 strand exchange activity. Interacts (when phosphorylated) with TOPBP1; interaction takes place following phosphorylation by CK2 and PLK1 and promotes recruitment to DNA damage sites. Interacts with GRB2; this interaction inhibits RAD51 ATPase activity to stabilize RAD51 on stalled replication forks. Ubiquitinated by the SCF(FBH1) E3 ubiquitin ligase complex, regulating RAD51 subcellular location and preventing its association with DNA. Ubiquitinated by RFWD3 in response to DNA damage: ubiquitination leads to degradation by the proteasome, promoting homologous recombination. Post-translationally, phosphorylation of Thr-309 by CHEK1 may enhance association with chromatin at sites of DNA damage and promote DNA repair by homologous recombination. Phosphorylated at Ser-14 by PLK1, triggering phosphorylation at Thr-13 by CK2, thereby promoting interaction with TOPBP1 and recruitment to DNA damage sites during S-phase. Phosphorylation by ABL1 inhibits function. Expressed in the testes (at protein level). Expressed in the brain (at protein level). Expressed in the thymus, spleen, ovary and small intestine.

Its subcellular location is the nucleus. It localises to the cytoplasm. The protein resides in the perinuclear region. It is found in the mitochondrion matrix. The protein localises to the chromosome. Its subcellular location is the cytoskeleton. It localises to the microtubule organizing center. The protein resides in the centrosome. Plays an important role in homologous strand exchange, a key step in DNA repair through homologous recombination (HR). Binds to single-stranded DNA in an ATP-dependent manner to form nucleoprotein filaments which are essential for the homology search and strand exchange. Catalyzes the recognition of homology and strand exchange between homologous DNA partners to form a joint molecule between a processed DNA break and the repair template. Recruited to resolve stalled replication forks during replication stress. Part of a PALB2-scaffolded HR complex containing BRCA2 and RAD51C and which is thought to play a role in DNA repair by HR. Plays a role in regulating mitochondrial DNA copy number under conditions of oxidative stress in the presence of RAD51C and XRCC3. Also involved in interstrand cross-link repair. The chain is DNA repair protein RAD51 homolog 1 from Mus musculus (Mouse).